Here is a 329-residue protein sequence, read N- to C-terminus: uncharacterized protein (329 aa).

Residues 38–184 (IVKLILKSQE…MACLMRAKNF (147 aa)) enclose the SIS domain. 56–61 (GVGKSA) contributes to the ATP binding site. CBS domains are found at residues 211-267 (QTTN…GVSL) and 270-329 (EVRH…GLKA).

It belongs to the SIS family. GutQ/KpsF subfamily.

This is an uncharacterized protein from Helicobacter pylori (strain ATCC 700392 / 26695) (Campylobacter pylori).